The primary structure comprises 1194 residues: UPF0507 protein PICST_55861 (1194 aa).

A VPS9 domain is found at 324–475; that stretch reads QSYDPEAVKF…LSSSLSDELS (152 aa).

The protein belongs to the UPF0507 family.

The chain is UPF0507 protein PICST_55861 from Scheffersomyces stipitis (strain ATCC 58785 / CBS 6054 / NBRC 10063 / NRRL Y-11545) (Yeast).